The chain runs to 418 residues: Glucose-1-phosphate adenylyltransferase (418 aa).

Residues Tyr104, Gly169, 184 to 185 (EK), and Ser202 contribute to the alpha-D-glucose 1-phosphate site.

The protein belongs to the bacterial/plant glucose-1-phosphate adenylyltransferase family. As to quaternary structure, homotetramer.

The enzyme catalyses alpha-D-glucose 1-phosphate + ATP + H(+) = ADP-alpha-D-glucose + diphosphate. The protein operates within glycan biosynthesis; glycogen biosynthesis. In terms of biological role, involved in the biosynthesis of ADP-glucose, a building block required for the elongation reactions to produce glycogen. Catalyzes the reaction between ATP and alpha-D-glucose 1-phosphate (G1P) to produce pyrophosphate and ADP-Glc. This Jannaschia sp. (strain CCS1) protein is Glucose-1-phosphate adenylyltransferase.